Here is a 247-residue protein sequence, read N- to C-terminus: Homeobox-leucine zipper protein HOX17 (247 aa).

A disordered region spans residues 58-81 (ERAGLRGGGGSDEEDGGCGIDGSR). Residues 79 to 138 (GSRKKLRLSKDQSAVLEDSFREHPTLNPRQKATLAQQLGLRPRQVEVWFQNRRARTKLKQ) constitute a DNA-binding region (homeobox). The tract at residues 137–182 (KQTEVDCEFLKRCCETLTEENRRLQKEVQELRALKLVSPHLYMNMS) is leucine-zipper.

It belongs to the HD-ZIP homeobox family. Class II subfamily. Expressed in seedlings, roots, stems, leaf sheaths and blades and panicles.

It localises to the nucleus. Probable transcription factor. This Oryza sativa subsp. indica (Rice) protein is Homeobox-leucine zipper protein HOX17 (HOX17).